Consider the following 1069-residue polypeptide: Calcium-transporting ATPase 10, plasma membrane-type (1069 aa).

Residues 1 to 29 form a disordered region; that stretch reads MSGQFNNSPRGEDKDVEAGTSSFTEYEDS. Serine 2 carries the post-translational modification N-acetylserine. Topologically, residues 2 to 180 are cytoplasmic; it reads SGQFNNSPRG…NTYPQKKGRS (179 aa). The tract at residues 42-53 is interaction with calmodulin; the sequence is ERLRRWRQAALV. Residues 181–201 form a helical membrane-spanning segment; the sequence is FWRFVWEASQDLTLIILIVAA. At 202 to 219 the chain is on the lumenal side; sequence VASLALGIKTEGIEKGWY. A helical transmembrane segment spans residues 220 to 240; the sequence is DGISIAFAVLLVIVVTATSDY. The Cytoplasmic portion of the chain corresponds to 241–369; it reads RQSLQFQNLN…GGETPLQVRL (129 aa). A helical membrane pass occupies residues 370–389; it reads NGVATFIGIVGLTVAGVVLF. The Lumenal portion of the chain corresponds to 390 to 426; sequence VLVVRYFTGHTKNEQGGPQFIGGKTKFEHVLDDLVEI. A helical membrane pass occupies residues 427-444; the sequence is FTVAVTIVVVAVPEGLPL. Residues 445 to 844 lie on the Cytoplasmic side of the membrane; that stretch reads AVTLTLAYSM…RWGRSVYANI (400 aa). The active-site 4-aspartylphosphate intermediate is aspartate 482. The Mg(2+) site is built by aspartate 789 and aspartate 793. The helical transmembrane segment at 845–863 threads the bilayer; it reads QKFIQFQLTVNVAALVINV. Over 864 to 874 the chain is Lumenal; it reads VAAISAGEVPL. The chain crosses the membrane as a helical span at residues 875–895; sequence TAVQLLWVNLIMDTLGALALA. Residues 896 to 915 lie on the Cytoplasmic side of the membrane; sequence TEPPTDHLMDRAPVGRREPL. A helical transmembrane segment spans residues 916-938; sequence ITNIMWRNLFIQAMYQVTVLLIL. At 939–951 the chain is on the lumenal side; sequence NFRGISILHLKSK. Residues 952–973 traverse the membrane as a helical segment; it reads PNAERVKNTVIFNAFVICQVFN. The Cytoplasmic portion of the chain corresponds to 974–991; that stretch reads EFNARKPDEINIFRGVLR. The helical transmembrane segment at 992 to 1013 threads the bilayer; it reads NHLFVGIISITIVLQVVIVEFL. Topologically, residues 1014-1023 are lumenal; that stretch reads GTFASTTKLD. Residues 1024–1045 form a helical membrane-spanning segment; that stretch reads WEMWLVCIGIGSISWPLAVIGK. Residues 1046-1069 lie on the Cytoplasmic side of the membrane; that stretch reads LIPVPETPVSQYFRINRWRRNSSG.

Belongs to the cation transport ATPase (P-type) (TC 3.A.3) family. Type IIB subfamily.

It is found in the membrane. The catalysed reaction is Ca(2+)(in) + ATP + H2O = Ca(2+)(out) + ADP + phosphate + H(+). With respect to regulation, activated by calmodulin. Its function is as follows. This magnesium-dependent enzyme catalyzes the hydrolysis of ATP coupled with the translocation of calcium from the cytosol into the endoplasmic reticulum. This is Calcium-transporting ATPase 10, plasma membrane-type (ACA10) from Arabidopsis thaliana (Mouse-ear cress).